Reading from the N-terminus, the 498-residue chain is TORTIFOLIA1-like protein 5 (498 aa).

HEAT repeat units lie at residues 56 to 93, 97 to 134, 136 to 173, 177 to 214, and 219 to 257; these read ETFS…SHGD, PHLS…NITG, PFSI…AADE, EQLQ…AVGG, and KAVL…VEEE. Residues 296–423 form a disordered region; sequence EGDSTEVSES…SSSQAKSNAE (128 aa). Positions 300 to 322 are enriched in low complexity; it reads TEVSESSSSSKSASSGLSATSGK. The segment covering 343-366 has biased composition (basic and acidic residues); that stretch reads NDVEPLDRGDTPKDVEQEAVVSKE. The segment covering 390–400 has biased composition (polar residues); it reads NGSNKSQVVQS. S426 is modified (phosphoserine).

The protein is TORTIFOLIA1-like protein 5 of Arabidopsis thaliana (Mouse-ear cress).